A 274-amino-acid polypeptide reads, in one-letter code: Undecaprenyl-diphosphatase (274 aa).

7 helical membrane passes run Phe-21 to Phe-39, Ala-44 to Trp-64, Phe-85 to Ile-105, Leu-109 to Ala-129, Ala-185 to Leu-205, Val-214 to Cys-234, and Phe-247 to Thr-267.

The protein belongs to the UppP family.

The protein localises to the cell inner membrane. It carries out the reaction di-trans,octa-cis-undecaprenyl diphosphate + H2O = di-trans,octa-cis-undecaprenyl phosphate + phosphate + H(+). Catalyzes the dephosphorylation of undecaprenyl diphosphate (UPP). Confers resistance to bacitracin. This is Undecaprenyl-diphosphatase from Verminephrobacter eiseniae (strain EF01-2).